The sequence spans 189 residues: Development-specific protein LVN1.2 (189 aa).

In terms of tissue distribution, endoderm cells.

In Lytechinus variegatus (Green sea urchin), this protein is Development-specific protein LVN1.2.